The primary structure comprises 256 residues: Probable transcriptional regulatory protein cce_0894 (256 aa).

This sequence belongs to the TACO1 family.

It is found in the cytoplasm. This is Probable transcriptional regulatory protein cce_0894 from Crocosphaera subtropica (strain ATCC 51142 / BH68) (Cyanothece sp. (strain ATCC 51142)).